The primary structure comprises 217 residues: Peptide methionine sulfoxide reductase MsrA 1 (217 aa).

The active site involves Cys-57.

The protein belongs to the MsrA Met sulfoxide reductase family.

It carries out the reaction L-methionyl-[protein] + [thioredoxin]-disulfide + H2O = L-methionyl-(S)-S-oxide-[protein] + [thioredoxin]-dithiol. The catalysed reaction is [thioredoxin]-disulfide + L-methionine + H2O = L-methionine (S)-S-oxide + [thioredoxin]-dithiol. Functionally, has an important function as a repair enzyme for proteins that have been inactivated by oxidation. Catalyzes the reversible oxidation-reduction of methionine sulfoxide in proteins to methionine. The sequence is that of Peptide methionine sulfoxide reductase MsrA 1 (msrA1) from Rhizobium meliloti (strain 1021) (Ensifer meliloti).